Here is a 341-residue protein sequence, read N- to C-terminus: L-threonine 3-dehydrogenase (341 aa).

Cysteine 38 provides a ligand contact to Zn(2+). Catalysis depends on charge relay system residues threonine 40 and histidine 43. Zn(2+) contacts are provided by histidine 63, glutamate 64, cysteine 93, cysteine 96, cysteine 99, and cysteine 107. Residues isoleucine 175, aspartate 195, arginine 200, 262–264 (LGI), and 286–287 (IY) each bind NAD(+).

It belongs to the zinc-containing alcohol dehydrogenase family. In terms of assembly, homotetramer. The cofactor is Zn(2+).

It localises to the cytoplasm. It carries out the reaction L-threonine + NAD(+) = (2S)-2-amino-3-oxobutanoate + NADH + H(+). The protein operates within amino-acid degradation; L-threonine degradation via oxydo-reductase pathway; glycine from L-threonine: step 1/2. Its function is as follows. Catalyzes the NAD(+)-dependent oxidation of L-threonine to 2-amino-3-ketobutyrate. In Shewanella loihica (strain ATCC BAA-1088 / PV-4), this protein is L-threonine 3-dehydrogenase.